Here is a 249-residue protein sequence, read N- to C-terminus: UDP-N-acetyl-D-mannosaminuronic acid transferase (249 aa).

Belongs to the glycosyltransferase 26 family.

It catalyses the reaction UDP-N-acetyl-alpha-D-mannosaminouronate + N-acetyl-alpha-D-glucosaminyl-di-trans,octa-cis-undecaprenyl diphosphate = beta-D-ManNAcA-(1-&gt;4)-alpha-D-GlcNAc-di-trans,octa-cis-undecaprenyl diphosphate + UDP + H(+). It participates in bacterial outer membrane biogenesis; enterobacterial common antigen biosynthesis. Its function is as follows. Catalyzes the synthesis of Und-PP-GlcNAc-ManNAcA (Lipid II), the second lipid-linked intermediate involved in enterobacterial common antigen (ECA) synthesis. The protein is UDP-N-acetyl-D-mannosaminuronic acid transferase of Pectobacterium carotovorum subsp. carotovorum (strain PC1).